We begin with the raw amino-acid sequence, 296 residues long: Glycine N-acyltransferase (296 aa).

N6-acetyllysine; alternate is present on lysine 16. An N6-succinyllysine; alternate modification is found at lysine 16. Lysine 113 bears the N6-acetyllysine mark. N6-acetyllysine; alternate is present on residues lysine 127 and lysine 142. Lysine 127 and lysine 142 each carry N6-succinyllysine; alternate. Lysine 159 carries the N6-acetyllysine modification. An N6-succinyllysine modification is found at lysine 169. N6-acetyllysine; alternate is present on residues lysine 183 and lysine 256. Residues lysine 183 and lysine 256 each carry the N6-succinyllysine; alternate modification. The residue at position 267 (lysine 267) is an N6-succinyllysine.

This sequence belongs to the glycine N-acyltransferase family.

The protein resides in the mitochondrion. The enzyme catalyses an acyl-CoA + glycine = an N-acylglycine + CoA + H(+). It catalyses the reaction benzoyl-CoA + glycine = N-benzoylglycine + CoA + H(+). Its function is as follows. Mitochondrial acyltransferase which transfers an acyl group to the N-terminus of glycine and glutamine, although much less efficiently. Can conjugate a multitude of substrates to form a variety of N-acylglycines, thereby detoxify xenobiotics, such as benzoic acid or salicylic acid, and endogenous organic acids, such as isovaleric acid. The sequence is that of Glycine N-acyltransferase (Glyat) from Rattus norvegicus (Rat).